The sequence spans 511 residues: Glucose-1-phosphate adenylyltransferase large subunit 1, chloroplastic/amyloplastic (511 aa).

A chloroplast-targeting transit peptide spans 1–58 (MAAMDLRVAAPASVAAAARCGTSLARPWPARAVGGGGGGGGRGRRLSVRTSVATTEAA).

Belongs to the bacterial/plant glucose-1-phosphate adenylyltransferase family. Heterotetramer composed of two small and two large subunits. As to expression, expressed in leaves and stems.

It is found in the plastid. It localises to the chloroplast. The protein resides in the amyloplast. It carries out the reaction alpha-D-glucose 1-phosphate + ATP + H(+) = ADP-alpha-D-glucose + diphosphate. The protein operates within glycan biosynthesis; starch biosynthesis. Its activity is regulated as follows. Activated by 3'phosphoglycerate, inhibited by orthophosphate. Allosteric regulation. Its function is as follows. Involved in synthesis of starch. Catalyzes the synthesis of ADP-glucose, a molecule that serves as an activated glycosyl donor for alpha-1,4-glucan synthesis. Essential for starch synthesis in leaf chloroplasts and endosperm amyloplasts. The sequence is that of Glucose-1-phosphate adenylyltransferase large subunit 1, chloroplastic/amyloplastic from Oryza sativa subsp. japonica (Rice).